The primary structure comprises 1168 residues: Probable pre-mRNA-splicing factor ATP-dependent RNA helicase DEAH5 (1168 aa).

Positions 76-206 (IYPPKPKSEK…KDEYVEEDKG (131 aa)) are disordered. Composition is skewed to basic and acidic residues over residues 81–172 (PKSE…DRRS) and 180–206 (GRGD…EDKG). Residues 214-283 (YQVYKGRVTR…SSDKYSLSMR (70 aa)) enclose the S1 motif domain. The disordered stretch occupies residues 289-326 (TGRDLIPLRKPSDEDDSSRSNPSYRTKDGQVTKTGISG). The residue at position 411 (Ser-411) is a Phosphoserine. Residues 525 to 688 (IQAVHDNQVL…FFNCNIFTIP (164 aa)) form the Helicase ATP-binding domain. 538 to 545 (GETGSGKT) is a binding site for ATP. The DEAH box signature appears at 635–638 (DEAH). Residues 706 to 886 (YLDAALITVL…MTTLTMKAMG (181 aa)) form the Helicase C-terminal domain.

This sequence belongs to the DEAD box helicase family. DEAH subfamily. PRP22 sub-subfamily.

It localises to the nucleus. The enzyme catalyses ATP + H2O = ADP + phosphate + H(+). May be involved in pre-mRNA splicing. In Arabidopsis thaliana (Mouse-ear cress), this protein is Probable pre-mRNA-splicing factor ATP-dependent RNA helicase DEAH5.